We begin with the raw amino-acid sequence, 349 residues long: Interferon-stimulated 20 kDa exonuclease-like 2 (349 aa).

Disordered regions lie at residues 1 to 100 (MSTL…AAVP) and 126 to 166 (ALPK…KYSG). Residues 14 to 23 (PPKKALEGNA) show a composition bias toward basic and acidic residues. Residues 24–47 (KHRKFVKKRRLLERKGFLNKKKQP) are compositionally biased toward basic residues. Basic and acidic residues predominate over residues 54–66 (LHSEPSQKGETPR). Low complexity predominate over residues 70-87 (TWKATPLPKKKTTAASSS). The segment covering 130–142 (IKSHPTRPQKKGS) has biased composition (basic residues). An Exonuclease domain is found at 175–331 (MVAIDCEMVG…EDAQATMELY (157 aa)).

It localises to the nucleus. Its subcellular location is the nucleolus. Functionally, 3'-&gt; 5'-exoribonuclease involved in ribosome biogenesis in the processing of the 12S pre-rRNA. Displays a strong specificity for a 3'-end containing a free hydroxyl group. This is Interferon-stimulated 20 kDa exonuclease-like 2 (ISG20L2) from Bos taurus (Bovine).